The sequence spans 360 residues: Magnesium transporter NIPA2 (360 aa).

Residues 1 to 9 (MSQGHGKYD) lie on the Extracellular side of the membrane. Residues 10-30 (FYIGLGLAMSSSIFIGGSFIL) form a helical membrane-spanning segment. Residues 31 to 56 (KKKGLLRLARKGSTRAGQGGHAYLKE) lie on the Cytoplasmic side of the membrane. Residues 57-77 (WLWWAGLLSMGAGEVANFAAY) form a helical membrane-spanning segment. A topological domain (extracellular) is located at residue Ala-78. The chain crosses the membrane as a helical span at residues 79–99 (FAPATLVTPLGALSVLVSAIL). Residues 100 to 107 (SSYFLNER) lie on the Cytoplasmic side of the membrane. A helical transmembrane segment spans residues 108-128 (LNLHGKIGCLLSILGSTVMVI). At 129 to 149 (HAPKEEEIETLNEMSHKLGDP) the chain is on the extracellular side. A helical transmembrane segment spans residues 150–170 (GFVVFATLVVIVSLILIFVVG). The Cytoplasmic segment spans residues 171-175 (PRHGQ). The chain crosses the membrane as a helical span at residues 176–196 (TNILVYITICSVIGAVSVSCA). Topologically, residues 197 to 215 (KGLGIAIKELFAGKPVLQH) are extracellular. A helical membrane pass occupies residues 216 to 236 (PLTWILLLSLIVCVSTQINYL). The Cytoplasmic portion of the chain corresponds to 237–246 (NRALDIFNTS). The chain crosses the membrane as a helical span at residues 247–267 (IVTPIYYVFFTTSVITCSAIL). Residues 268–278 (FKEWQDMPVDD) are Extracellular-facing. The chain crosses the membrane as a helical span at residues 279 to 299 (VIGTLSGFFTIIVGIFLLHAF). The Cytoplasmic segment spans residues 300-360 (KDVSFSLSSL…SRRNGNLTAF (61 aa)).

The protein belongs to the NIPA family.

Its subcellular location is the cell membrane. It localises to the early endosome. It carries out the reaction Mg(2+)(in) = Mg(2+)(out). Functionally, acts as a selective Mg(2+) transporter. The polypeptide is Magnesium transporter NIPA2 (NIPA2) (Bos taurus (Bovine)).